The primary structure comprises 289 residues: Mitochondrial fission regulator 1-like (289 aa).

Threonine 27 is subject to Phosphothreonine. Residues serine 38, serine 100, serine 107, serine 221, serine 222, serine 235, serine 258, and serine 270 each carry the phosphoserine modification.

Belongs to the MTFR1 family. Phosphorylated by AMPK. Upon stress, phosphorylation by AMPK is sufficient to induce mitochondrial fragmentation.

It is found in the mitochondrion outer membrane. Mitochondrial protein required for adaptation of miochondrial dynamics to metabolic changes. Regulates mitochondrial morphology at steady state and mediates AMPK-dependent stress-induced mitochondrial fragmentation via the control of OPA1 levels. The protein is Mitochondrial fission regulator 1-like (MTFR1L) of Bos taurus (Bovine).